The following is a 129-amino-acid chain: Large-conductance mechanosensitive channel (129 aa).

2 consecutive transmembrane segments (helical) span residues 10–30 (FAVKGNVVDMAVGVIIGGAFG) and 76–96 (GAFIQNVFDFLIIAIAVFGMV).

This sequence belongs to the MscL family. In terms of assembly, homopentamer.

The protein resides in the cell inner membrane. Functionally, channel that opens in response to stretch forces in the membrane lipid bilayer. May participate in the regulation of osmotic pressure changes within the cell. The protein is Large-conductance mechanosensitive channel of Actinobacillus pleuropneumoniae serotype 5b (strain L20).